Here is a 92-residue protein sequence, read N- to C-terminus: UPF0358 protein SH1840 (92 aa).

Belongs to the UPF0358 family.

The sequence is that of UPF0358 protein SH1840 from Staphylococcus haemolyticus (strain JCSC1435).